The following is a 619-amino-acid chain: Elongation factor 4 (619 aa).

The region spanning 17-198 (SVIRNFCIIA…RVVRAIPGPE (182 aa)) is the tr-type G domain. Residues 29 to 34 (DHGKST) and 145 to 148 (NKID) each bind GTP.

This sequence belongs to the TRAFAC class translation factor GTPase superfamily. Classic translation factor GTPase family. LepA subfamily.

The protein localises to the cell membrane. The enzyme catalyses GTP + H2O = GDP + phosphate + H(+). Required for accurate and efficient protein synthesis under certain stress conditions. May act as a fidelity factor of the translation reaction, by catalyzing a one-codon backward translocation of tRNAs on improperly translocated ribosomes. Back-translocation proceeds from a post-translocation (POST) complex to a pre-translocation (PRE) complex, thus giving elongation factor G a second chance to translocate the tRNAs correctly. Binds to ribosomes in a GTP-dependent manner. This is Elongation factor 4 from Micrococcus luteus (strain ATCC 4698 / DSM 20030 / JCM 1464 / CCM 169 / CCUG 5858 / IAM 1056 / NBRC 3333 / NCIMB 9278 / NCTC 2665 / VKM Ac-2230) (Micrococcus lysodeikticus).